A 251-amino-acid chain; its full sequence is Flap endonuclease Xni (251 aa).

Asp104 is a Mg(2+) binding site. One can recognise a 5'-3' exonuclease domain in the interval 160 to 250; it reads VQPQQLPDYW…DGNLQQLRLK (91 aa). 5 residues coordinate K(+): Leu171, Ala172, Pro180, Val182, and Ile185. Positions 184–189 are interaction with DNA; the sequence is GIGPKS.

The protein belongs to the Xni family. Mg(2+) is required as a cofactor. K(+) serves as cofactor.

In terms of biological role, has flap endonuclease activity. During DNA replication, flap endonucleases cleave the 5'-overhanging flap structure that is generated by displacement synthesis when DNA polymerase encounters the 5'-end of a downstream Okazaki fragment. The sequence is that of Flap endonuclease Xni from Escherichia fergusonii (strain ATCC 35469 / DSM 13698 / CCUG 18766 / IAM 14443 / JCM 21226 / LMG 7866 / NBRC 102419 / NCTC 12128 / CDC 0568-73).